The following is a 306-amino-acid chain: Pantothenate kinase (306 aa).

An ATP-binding site is contributed by 91-98; sequence GSVAVGKS.

It belongs to the prokaryotic pantothenate kinase family.

The protein localises to the cytoplasm. It carries out the reaction (R)-pantothenate + ATP = (R)-4'-phosphopantothenate + ADP + H(+). Its pathway is cofactor biosynthesis; coenzyme A biosynthesis; CoA from (R)-pantothenate: step 1/5. This chain is Pantothenate kinase, found in Streptococcus equi subsp. zooepidemicus (strain MGCS10565).